We begin with the raw amino-acid sequence, 207 residues long: Thiamine-phosphate synthase (207 aa).

4-amino-2-methyl-5-(diphosphooxymethyl)pyrimidine-binding positions include 35 to 39 and Asn67; that span reads QYRDK. Mg(2+)-binding residues include Asp68 and Asp86. Thr105 is a binding site for 4-amino-2-methyl-5-(diphosphooxymethyl)pyrimidine. 132-134 lines the 2-[(2R,5Z)-2-carboxy-4-methylthiazol-5(2H)-ylidene]ethyl phosphate pocket; it reads SVT. Lys135 provides a ligand contact to 4-amino-2-methyl-5-(diphosphooxymethyl)pyrimidine. A 2-[(2R,5Z)-2-carboxy-4-methylthiazol-5(2H)-ylidene]ethyl phosphate-binding site is contributed by Gly162.

It belongs to the thiamine-phosphate synthase family. Requires Mg(2+) as cofactor.

The catalysed reaction is 2-[(2R,5Z)-2-carboxy-4-methylthiazol-5(2H)-ylidene]ethyl phosphate + 4-amino-2-methyl-5-(diphosphooxymethyl)pyrimidine + 2 H(+) = thiamine phosphate + CO2 + diphosphate. The enzyme catalyses 2-(2-carboxy-4-methylthiazol-5-yl)ethyl phosphate + 4-amino-2-methyl-5-(diphosphooxymethyl)pyrimidine + 2 H(+) = thiamine phosphate + CO2 + diphosphate. It carries out the reaction 4-methyl-5-(2-phosphooxyethyl)-thiazole + 4-amino-2-methyl-5-(diphosphooxymethyl)pyrimidine + H(+) = thiamine phosphate + diphosphate. It functions in the pathway cofactor biosynthesis; thiamine diphosphate biosynthesis; thiamine phosphate from 4-amino-2-methyl-5-diphosphomethylpyrimidine and 4-methyl-5-(2-phosphoethyl)-thiazole: step 1/1. Condenses 4-methyl-5-(beta-hydroxyethyl)thiazole monophosphate (THZ-P) and 2-methyl-4-amino-5-hydroxymethyl pyrimidine pyrophosphate (HMP-PP) to form thiamine monophosphate (TMP). In Pseudomonas putida (strain GB-1), this protein is Thiamine-phosphate synthase.